The following is a 246-amino-acid chain: Pyridoxine 5'-phosphate synthase (246 aa).

2 residues coordinate 3-amino-2-oxopropyl phosphate: Asn-8 and Arg-19. His-44 serves as the catalytic Proton acceptor. Positions 46 and 51 each coordinate 1-deoxy-D-xylulose 5-phosphate. Glu-76 functions as the Proton acceptor in the catalytic mechanism. A 1-deoxy-D-xylulose 5-phosphate-binding site is contributed by Thr-106. The Proton donor role is filled by His-198. Residues Asp-199 and 221-222 (GH) contribute to the 3-amino-2-oxopropyl phosphate site.

This sequence belongs to the PNP synthase family. As to quaternary structure, homooctamer; tetramer of dimers.

Its subcellular location is the cytoplasm. The catalysed reaction is 3-amino-2-oxopropyl phosphate + 1-deoxy-D-xylulose 5-phosphate = pyridoxine 5'-phosphate + phosphate + 2 H2O + H(+). It functions in the pathway cofactor biosynthesis; pyridoxine 5'-phosphate biosynthesis; pyridoxine 5'-phosphate from D-erythrose 4-phosphate: step 5/5. Catalyzes the complicated ring closure reaction between the two acyclic compounds 1-deoxy-D-xylulose-5-phosphate (DXP) and 3-amino-2-oxopropyl phosphate (1-amino-acetone-3-phosphate or AAP) to form pyridoxine 5'-phosphate (PNP) and inorganic phosphate. The polypeptide is Pyridoxine 5'-phosphate synthase (Mesorhizobium japonicum (strain LMG 29417 / CECT 9101 / MAFF 303099) (Mesorhizobium loti (strain MAFF 303099))).